The primary structure comprises 212 residues: Orotate phosphoribosyltransferase (212 aa).

Residues Arg-94, Lys-98, His-100, and 120–128 (EDLISTGGS) contribute to the 5-phospho-alpha-D-ribose 1-diphosphate site. Ser-124 serves as a coordination point for orotate.

The protein belongs to the purine/pyrimidine phosphoribosyltransferase family. PyrE subfamily. In terms of assembly, homodimer. Mg(2+) is required as a cofactor.

The enzyme catalyses orotidine 5'-phosphate + diphosphate = orotate + 5-phospho-alpha-D-ribose 1-diphosphate. Its pathway is pyrimidine metabolism; UMP biosynthesis via de novo pathway; UMP from orotate: step 1/2. In terms of biological role, catalyzes the transfer of a ribosyl phosphate group from 5-phosphoribose 1-diphosphate to orotate, leading to the formation of orotidine monophosphate (OMP). This chain is Orotate phosphoribosyltransferase, found in Bacillus pumilus (strain SAFR-032).